The primary structure comprises 136 residues: MSEEDPKACAEPEEPKAGPPPEKTSDWYRVSEDLPARFNNPAWFRGYRTKEPPSVYRTSNQAYGSRAPTVHEMPKVFYPNSYKFSRQVAVGGMFQNNTLNVYMEKSIVTGPDNYITSYDRLNFHPSYRVCRPSICD.

Residues 1–16 are compositionally biased toward basic and acidic residues; it reads MSEEDPKACAEPEEPK. A disordered region spans residues 1-27; sequence MSEEDPKACAEPEEPKAGPPPEKTSDW.

Belongs to the PIERCE1 family. As to quaternary structure, microtubule inner protein component of sperm flagellar doublet microtubules. Interacts with CFAP53, ODAD1 and ODAD3; the interactions link the outer dynein arms docking complex (ODA-DC) to the internal microtubule inner proteins (MIP) in cilium axoneme. Expressed in trachea multiciliated cells.

The protein resides in the cytoplasm. It is found in the cytoskeleton. The protein localises to the cilium axoneme. Its subcellular location is the flagellum axoneme. Functionally, microtubule inner protein involved in the attachment of outer dynein arms (ODAs) to dynein-decorated doublet microtubules (DMTs) in cilia axoneme, which is required for motile cilia beating. Functions at the initial step of left-right asymmetry specification of the visceral organs. This is Piercer of microtubule wall 1 protein (PIERCE1) from Bos taurus (Bovine).